Consider the following 617-residue polypeptide: Chaperone protein HscA homolog (617 aa).

This sequence belongs to the heat shock protein 70 family.

Chaperone involved in the maturation of iron-sulfur cluster-containing proteins. Has a low intrinsic ATPase activity which is markedly stimulated by HscB. This is Chaperone protein HscA homolog from Photobacterium profundum (strain SS9).